The chain runs to 501 residues: 7-alpha-hydroxycholest-4-en-3-one 12-alpha-hydroxylase (501 aa).

The chain crosses the membrane as a helical span at residues 1–21; sequence MVLWGPVLGALLVVIAGYLCL. At Ser-326 the chain carries Phosphoserine. Cys-440 is a heme binding site.

The protein belongs to the cytochrome P450 family. Heme serves as cofactor. In terms of tissue distribution, liver.

It is found in the endoplasmic reticulum membrane. The protein resides in the microsome membrane. It catalyses the reaction 7alpha-hydroxycholest-4-en-3-one + reduced [NADPH--hemoprotein reductase] + O2 = 7alpha,12alpha-dihydroxycholest-4-en-3-one + oxidized [NADPH--hemoprotein reductase] + H2O + H(+). It carries out the reaction 5beta-cholestane-3alpha,7alpha-diol + reduced [NADPH--hemoprotein reductase] + O2 = 5beta-cholestane-3alpha,7alpha,12alpha-triol + oxidized [NADPH--hemoprotein reductase] + H2O + H(+). The enzyme catalyses chenodeoxycholate + reduced [NADPH--hemoprotein reductase] + O2 = cholate + oxidized [NADPH--hemoprotein reductase] + H2O + H(+). It functions in the pathway lipid metabolism; bile acid biosynthesis. A cytochrome P450 monooxygenase involved in primary bile acid biosynthesis. Catalyzes the 12alpha-hydroxylation of 7alpha-hydroxy-4-cholesten-3-one, an intermediate metabolite in cholic acid biosynthesis. Controls biliary balance of cholic acid and chenodeoxycholic acid, ultimately regulating the intestinal absorption of dietary lipids. Mechanistically, uses molecular oxygen inserting one oxygen atom into a substrate, and reducing the second into a water molecule, with two electrons provided by NADPH via cytochrome P450 reductase (CPR; NADPH--hemoprotein reductase). The sequence is that of 7-alpha-hydroxycholest-4-en-3-one 12-alpha-hydroxylase from Homo sapiens (Human).